Here is a 443-residue protein sequence, read N- to C-terminus: Ribosomal protein uS12 methylthiotransferase RimO (443 aa).

Positions Pro8–Pro118 constitute an MTTase N-terminal domain. Residues Cys17, Cys53, Cys82, Cys151, Cys155, and Cys158 each contribute to the [4Fe-4S] cluster site. One can recognise a Radical SAM core domain in the interval Leu137–Ala375. The TRAM domain maps to Gln378–Ile443.

It belongs to the methylthiotransferase family. RimO subfamily. It depends on [4Fe-4S] cluster as a cofactor.

Its subcellular location is the cytoplasm. It carries out the reaction L-aspartate(89)-[ribosomal protein uS12]-hydrogen + (sulfur carrier)-SH + AH2 + 2 S-adenosyl-L-methionine = 3-methylsulfanyl-L-aspartate(89)-[ribosomal protein uS12]-hydrogen + (sulfur carrier)-H + 5'-deoxyadenosine + L-methionine + A + S-adenosyl-L-homocysteine + 2 H(+). In terms of biological role, catalyzes the methylthiolation of an aspartic acid residue of ribosomal protein uS12. In Pseudomonas putida (strain ATCC 700007 / DSM 6899 / JCM 31910 / BCRC 17059 / LMG 24140 / F1), this protein is Ribosomal protein uS12 methylthiotransferase RimO.